A 229-amino-acid chain; its full sequence is Potassium/proton antiporter CemA (229 aa).

3 helical membrane passes run 7-27 (FTPL…SFSV), 107-127 (ILHF…SILG), and 189-209 (IISG…KYWI).

It belongs to the CemA family.

Its subcellular location is the plastid. It is found in the chloroplast inner membrane. It catalyses the reaction K(+)(in) + H(+)(out) = K(+)(out) + H(+)(in). Its function is as follows. Contributes to K(+)/H(+) antiport activity by supporting proton efflux to control proton extrusion and homeostasis in chloroplasts in a light-dependent manner to modulate photosynthesis. Prevents excessive induction of non-photochemical quenching (NPQ) under continuous-light conditions. Indirectly promotes efficient inorganic carbon uptake into chloroplasts. This chain is Potassium/proton antiporter CemA, found in Nicotiana sylvestris (Wood tobacco).